Here is a 74-residue protein sequence, read N- to C-terminus: MARITVEDCLEKINNRFLIVQMAIKRVHQYREGYDPLVECKNKEVVTALREIAAGEVMPADSIEEAGVFLPATK.

Belongs to the RNA polymerase subunit omega family. The RNAP catalytic core consists of 2 alpha, 1 beta, 1 beta' and 1 omega subunit. When a sigma factor is associated with the core the holoenzyme is formed, which can initiate transcription.

The catalysed reaction is RNA(n) + a ribonucleoside 5'-triphosphate = RNA(n+1) + diphosphate. Its function is as follows. Promotes RNA polymerase assembly. Latches the N- and C-terminal regions of the beta' subunit thereby facilitating its interaction with the beta and alpha subunits. The protein is DNA-directed RNA polymerase subunit omega of Solidesulfovibrio magneticus (strain ATCC 700980 / DSM 13731 / RS-1) (Desulfovibrio magneticus).